A 225-amino-acid chain; its full sequence is Ribonuclease 3 (225 aa).

The RNase III domain maps to 7 to 132; that stretch reads MKAFEARLGY…VIAAVYRDGG (126 aa). A Mg(2+)-binding site is contributed by Glu45. Asp49 is a catalytic residue. Mg(2+) contacts are provided by Asp118 and Glu121. The active site involves Glu121. The DRBM domain maps to 157–225; it reads DAKTALQEWA…AARKLLDSLD (69 aa).

This sequence belongs to the ribonuclease III family. Homodimer. Requires Mg(2+) as cofactor.

It is found in the cytoplasm. It catalyses the reaction Endonucleolytic cleavage to 5'-phosphomonoester.. Functionally, digests double-stranded RNA. Involved in the processing of primary rRNA transcript to yield the immediate precursors to the large and small rRNAs (23S and 16S). Processes some mRNAs, and tRNAs when they are encoded in the rRNA operon. Processes pre-crRNA and tracrRNA of type II CRISPR loci if present in the organism. The sequence is that of Ribonuclease 3 from Ruegeria pomeroyi (strain ATCC 700808 / DSM 15171 / DSS-3) (Silicibacter pomeroyi).